The sequence spans 416 residues: Putative gustatory receptor 57a (416 aa).

The Cytoplasmic segment spans residues methionine 1–valine 13. The chain crosses the membrane as a helical span at residues phenylalanine 14 to isoleucine 34. Topologically, residues arginine 35 to tyrosine 48 are extracellular. The chain crosses the membrane as a helical span at residues serine 49 to alanine 69. The Cytoplasmic portion of the chain corresponds to glutamate 70–leucine 83. A helical transmembrane segment spans residues valine 84–isoleucine 104. The Extracellular portion of the chain corresponds to serine 105–lysine 143. A helical transmembrane segment spans residues asparagine 144–valine 164. Residues glutamine 165–arginine 171 lie on the Cytoplasmic side of the membrane. Residues alanine 172–glycine 192 form a helical membrane-spanning segment. At tyrosine 193 to arginine 295 the chain is on the extracellular side. N-linked (GlcNAc...) asparagine glycosylation occurs at asparagine 290. The chain crosses the membrane as a helical span at residues methionine 296–phenylalanine 316. Topologically, residues tyrosine 317 to lysine 374 are cytoplasmic. The chain crosses the membrane as a helical span at residues valine 375–methionine 395. The Extracellular portion of the chain corresponds to threonine 396–phenylalanine 416.

It belongs to the insect chemoreceptor superfamily. Gustatory receptor (GR) family. Gr57a subfamily. In larvae, is expressed in neurons of the terminal external chemosensory organ as well as in the dorsal pharyngeal sense organ.

It localises to the cell membrane. Probable gustatory receptor which mediates acceptance or avoidance behavior, depending on its substrates. In Drosophila melanogaster (Fruit fly), this protein is Putative gustatory receptor 57a (Gr57a).